Consider the following 85-residue polypeptide: Large ribosomal subunit protein bL27 (85 aa).

The segment at methionine 1 to leucine 21 is disordered.

It belongs to the bacterial ribosomal protein bL27 family.

The protein is Large ribosomal subunit protein bL27 of Thermus thermophilus (strain ATCC BAA-163 / DSM 7039 / HB27).